Here is a 469-residue protein sequence, read N- to C-terminus: Glutamate--tRNA ligase (469 aa).

Residues 9 to 19 (PSPTGFLHVGG) carry the 'HIGH' region motif. A 'KMSKS' region motif is present at residues 236–240 (KLSKR). K239 lines the ATP pocket.

This sequence belongs to the class-I aminoacyl-tRNA synthetase family. Glutamate--tRNA ligase type 1 subfamily. As to quaternary structure, monomer.

The protein localises to the cytoplasm. The enzyme catalyses tRNA(Glu) + L-glutamate + ATP = L-glutamyl-tRNA(Glu) + AMP + diphosphate. Its function is as follows. Catalyzes the attachment of glutamate to tRNA(Glu) in a two-step reaction: glutamate is first activated by ATP to form Glu-AMP and then transferred to the acceptor end of tRNA(Glu). This chain is Glutamate--tRNA ligase, found in Shewanella amazonensis (strain ATCC BAA-1098 / SB2B).